The primary structure comprises 337 residues: tRNA N6-adenosine threonylcarbamoyltransferase (337 aa).

Fe cation contacts are provided by histidine 111 and histidine 115. Residues 134–138, aspartate 167, glycine 180, and asparagine 272 each bind substrate; that span reads LVSGG. Fe cation is bound at residue aspartate 300.

It belongs to the KAE1 / TsaD family. Fe(2+) is required as a cofactor.

It localises to the cytoplasm. The enzyme catalyses L-threonylcarbamoyladenylate + adenosine(37) in tRNA = N(6)-L-threonylcarbamoyladenosine(37) in tRNA + AMP + H(+). Its function is as follows. Required for the formation of a threonylcarbamoyl group on adenosine at position 37 (t(6)A37) in tRNAs that read codons beginning with adenine. Is involved in the transfer of the threonylcarbamoyl moiety of threonylcarbamoyl-AMP (TC-AMP) to the N6 group of A37, together with TsaE and TsaB. TsaD likely plays a direct catalytic role in this reaction. The chain is tRNA N6-adenosine threonylcarbamoyltransferase from Salmonella arizonae (strain ATCC BAA-731 / CDC346-86 / RSK2980).